Here is a 918-residue protein sequence, read N- to C-terminus: UPF0182 protein CPR_0011 (918 aa).

7 consecutive transmembrane segments (helical) span residues 8–28 (TVLISILLLVVVFFVSTNFII), 46–66 (LIAICKLFVPIFILYFCVIAI), 91–111 (FLLSNLVISILGAGATATTQW), 151–171 (AISLIIILVLITVIIYLALGF), 200–220 (LAVLASVLSLLIGCSYLLKSY), 243–263 (IFYKVIAIACVISSIVVFISI), and 271–291 (IIISIASIAVLIVLEPVVAIF).

This sequence belongs to the UPF0182 family.

It localises to the cell membrane. In Clostridium perfringens (strain SM101 / Type A), this protein is UPF0182 protein CPR_0011.